We begin with the raw amino-acid sequence, 95 residues long: Aspartyl/glutamyl-tRNA(Asn/Gln) amidotransferase subunit C (95 aa).

Belongs to the GatC family. As to quaternary structure, heterotrimer of A, B and C subunits.

The enzyme catalyses L-glutamyl-tRNA(Gln) + L-glutamine + ATP + H2O = L-glutaminyl-tRNA(Gln) + L-glutamate + ADP + phosphate + H(+). It carries out the reaction L-aspartyl-tRNA(Asn) + L-glutamine + ATP + H2O = L-asparaginyl-tRNA(Asn) + L-glutamate + ADP + phosphate + 2 H(+). Allows the formation of correctly charged Asn-tRNA(Asn) or Gln-tRNA(Gln) through the transamidation of misacylated Asp-tRNA(Asn) or Glu-tRNA(Gln) in organisms which lack either or both of asparaginyl-tRNA or glutaminyl-tRNA synthetases. The reaction takes place in the presence of glutamine and ATP through an activated phospho-Asp-tRNA(Asn) or phospho-Glu-tRNA(Gln). This is Aspartyl/glutamyl-tRNA(Asn/Gln) amidotransferase subunit C from Chlorobaculum parvum (strain DSM 263 / NCIMB 8327) (Chlorobium vibrioforme subsp. thiosulfatophilum).